The chain runs to 209 residues: Mitochondrial import inner membrane translocase subunit Tim23 (209 aa).

Transmembrane regions (helical) follow at residues 73–93 (FELA…FGAM), 125–145 (ALWA…GVII), and 172–194 (GGLR…YALY).

The protein belongs to the Tim17/Tim22/Tim23 family. Component of the TIM23 complex at least composed of TIMM23, TIMM17 (TIMM17A or TIMM17B) and TIMM50; within this complex, directly interacts with TIMM50. The complex interacts with the TIMM44 component of the PAM complex and with DNAJC15. Upon mitochondrial depolarization, interacts with PINK1; the interaction is required for PINK1 accumulation at the outer mitochondrial membrane, kinase activation by autophosphorylation and PRKN recruitement to mitochondria.

Its subcellular location is the mitochondrion inner membrane. In terms of biological role, essential component of the TIM23 complex, a complex that mediates the translocation of transit peptide-containing proteins across the mitochondrial inner membrane. Has a role in the activation of stress-induced mitophagy by protecting PINK1 from OMA1-mediated degradation and facilitating its accumulation at the outer mitochondrial membrane in response to depolarization. This Pongo abelii (Sumatran orangutan) protein is Mitochondrial import inner membrane translocase subunit Tim23 (TIMM23).